The following is a 394-amino-acid chain: RILP-like protein 1 (394 aa).

The RH1 domain occupies 2-89 (EGISALEKNV…RLERMDRIEK (88 aa)). Positions 68-312 (EMEELRLELD…KVFMLQEELA (245 aa)) form a coiled coil. Residues 282-347 (RPRFTLQELR…IPQESGIKRL (66 aa)) form the RH2 domain. The segment at 318-337 (EADEEHKLPQSSPVIDSKAP) is disordered.

It belongs to the RILPL family.

It localises to the cytoplasm. The protein localises to the cytosol. The protein resides in the cytoskeleton. It is found in the microtubule organizing center. Its subcellular location is the centrosome. It localises to the cell projection. The protein localises to the cilium. Functionally, plays a role in the regulation of cell shape and polarity. Plays a role in cellular protein transport, including protein transport away from primary cilia. Neuroprotective protein. The chain is RILP-like protein 1 (rilpl1) from Xenopus tropicalis (Western clawed frog).